The following is a 188-amino-acid chain: FMN-dependent NADPH-azoreductase (188 aa).

This sequence belongs to the azoreductase type 2 family. Homotetramer. It depends on FMN as a cofactor.

Catalyzes the reductive cleavage of azo bond in aromatic azo compounds to the corresponding amines. Requires NADPH, but not NADH, as an electron donor for its activity. The protein is FMN-dependent NADPH-azoreductase (azo1) of Staphylococcus epidermidis (strain ATCC 12228 / FDA PCI 1200).